A 184-amino-acid chain; its full sequence is Mediator of RNA polymerase II transcription subunit 28 (184 aa).

A coiled-coil region spans residues 77-105; the sequence is LLKEENFDLKQEIARKDELIRKHYEKIES.

It belongs to the Mediator complex subunit 28 family. Component of the Mediator complex.

It localises to the nucleus. Component of the Mediator complex, a coactivator involved in the regulated transcription of nearly all RNA polymerase II-dependent genes. Mediator functions as a bridge to convey information from gene-specific regulatory proteins to the basal RNA polymerase II transcription machinery. Mediator is recruited to promoters by direct interactions with regulatory proteins and serves as a scaffold for the assembly of a functional preinitiation complex with RNA polymerase II and the general transcription factors. The sequence is that of Mediator of RNA polymerase II transcription subunit 28 (MED28) from Aedes aegypti (Yellowfever mosquito).